A 203-amino-acid chain; its full sequence is Dephospho-CoA kinase (203 aa).

The 200-residue stretch at 4-203 folds into the DPCK domain; the sequence is VIGITGGIAT…EEGYIQSESE (200 aa). 12–17 lines the ATP pocket; it reads ATGKST.

It belongs to the CoaE family.

Its subcellular location is the cytoplasm. It catalyses the reaction 3'-dephospho-CoA + ATP = ADP + CoA + H(+). It participates in cofactor biosynthesis; coenzyme A biosynthesis; CoA from (R)-pantothenate: step 5/5. Catalyzes the phosphorylation of the 3'-hydroxyl group of dephosphocoenzyme A to form coenzyme A. The polypeptide is Dephospho-CoA kinase (Staphylococcus epidermidis (strain ATCC 12228 / FDA PCI 1200)).